Consider the following 168-residue polypeptide: CASP-like protein 4D1 (168 aa).

Residues 1 to 11 (MAPPPPSLASR) are Cytoplasmic-facing. A helical transmembrane segment spans residues 12 to 32 (MAALILRILTFIFLIASLVIL). At 33–57 (TTNTATLELDLVEVKVHFKDVYAYR) the chain is on the extracellular side. The chain crosses the membrane as a helical span at residues 58–78 (YMLATIVIGLAYTVLQIAFTL). Residues 79-97 (YYVATGNRMMSGDGNLAFD) are Cytoplasmic-facing. Residues 98–118 (FFGDKVISYILVTGAAAGFAS) form a helical membrane-spanning segment. The Extracellular portion of the chain corresponds to 119–144 (TKDIKPVFSGSGDFDAFINKGYASAS). A helical membrane pass occupies residues 145–165 (LLLIGFVCTAVLSVFSSYALP). The Cytoplasmic segment spans residues 166–168 (KQV).

The protein belongs to the Casparian strip membrane proteins (CASP) family. In terms of assembly, homodimer and heterodimers.

The protein localises to the cell membrane. The sequence is that of CASP-like protein 4D1 from Ricinus communis (Castor bean).